The chain runs to 273 residues: Glutamate 5-kinase (273 aa).

An ATP-binding site is contributed by Lys-15. The substrate site is built by Ser-55, Asp-142, and Asn-158. ATP-binding positions include 178 to 179 (SD) and 220 to 226 (TGGMLSK).

Belongs to the glutamate 5-kinase family.

The protein localises to the cytoplasm. The catalysed reaction is L-glutamate + ATP = L-glutamyl 5-phosphate + ADP. Its pathway is amino-acid biosynthesis; L-proline biosynthesis; L-glutamate 5-semialdehyde from L-glutamate: step 1/2. Catalyzes the transfer of a phosphate group to glutamate to form L-glutamate 5-phosphate. The polypeptide is Glutamate 5-kinase (Streptococcus pyogenes serotype M49 (strain NZ131)).